Consider the following 37-residue polypeptide: Large ribosomal subunit protein bL36B (37 aa).

It belongs to the bacterial ribosomal protein bL36 family.

This is Large ribosomal subunit protein bL36B from Paenarthrobacter aurescens (strain TC1).